An 847-amino-acid chain; its full sequence is Glucans biosynthesis glucosyltransferase H (847 aa).

Topologically, residues 1–139 are cytoplasmic; it reads MNKTTEYIDA…WRTVGTIRRY (139 aa). A helical transmembrane segment spans residues 140-160; that stretch reads ILLILTLAQTVVATWYMKTIL. Residues 161–193 are Periplasmic-facing; the sequence is PYQGWALINPMDMVGQDLWVSFMQLLPYMLQTG. A helical membrane pass occupies residues 194–214; sequence ILILFAVLFCWVSAGFWTALM. The Cytoplasmic portion of the chain corresponds to 215–512; that stretch reads GFLQLLIGRD…VKGMHPVHRA (298 aa). The helical transmembrane segment at 513 to 533 threads the bilayer; sequence VFLTGVMSYLSAPLWFMFLAL. Topologically, residues 534-569 are periplasmic; the sequence is STALQVVHALTEPQYFLQPRQLFPVWPQWRPELAIA. A helical transmembrane segment spans residues 570–590; that stretch reads LFASTMVLLFLPKLLSILLIW. The Cytoplasmic portion of the chain corresponds to 591-602; the sequence is CKGTKEYGGFWR. A helical transmembrane segment spans residues 603–625; it reads VTLSLLLEVLFSVLLAPVRMLFH. The Periplasmic segment spans residues 626 to 679; it reads TVFVVSAFLGWEVVWNSPQRDDDSTSWGEAFKRHGSQLLLGLVWAVGMAWLDLR. A helical membrane pass occupies residues 680-700; sequence FLFWLAPIVFSLILSPFVSVI. Topologically, residues 701–847 are cytoplasmic; the sequence is SSRATVGLRT…ALRKPDAASQ (147 aa).

This sequence belongs to the glycosyltransferase 2 family. OpgH subfamily.

The protein localises to the cell inner membrane. It functions in the pathway glycan metabolism; osmoregulated periplasmic glucan (OPG) biosynthesis. Its function is as follows. Involved in the biosynthesis of osmoregulated periplasmic glucans (OPGs). The chain is Glucans biosynthesis glucosyltransferase H (mdoH) from Shigella flexneri.